Here is a 549-residue protein sequence, read N- to C-terminus: Undecaprenyl phosphate-alpha-4-amino-4-deoxy-L-arabinose arabinosyl transferase (549 aa).

The next 12 helical transmembrane spans lie at 9-29 (LLLI…GLWI), 80-100 (LFGV…LAYL), 112-132 (SLAC…SGYA), 133-153 (NLDP…WHAL), 176-196 (FLTK…PYML), 204-224 (LLGY…PWAL), 256-276 (PWWF…GLLP), 288-308 (QAPV…FSLS), 312-332 (LPTY…HALV), 346-366 (NGLL…YLQL), 376-396 (FELF…LAQW), and 402-422 (AWAA…AAMP).

This sequence belongs to the glycosyltransferase 83 family.

Its subcellular location is the cell inner membrane. It carries out the reaction 4-amino-4-deoxy-alpha-L-arabinopyranosyl di-trans,octa-cis-undecaprenyl phosphate + lipid IVA = lipid IIA + di-trans,octa-cis-undecaprenyl phosphate.. It functions in the pathway lipopolysaccharide metabolism; 4-amino-4-deoxy-beta-L-arabinose-lipid A biosynthesis. Its function is as follows. Catalyzes the transfer of the L-Ara4N moiety of the glycolipid undecaprenyl phosphate-alpha-L-Ara4N to lipid A. The modified arabinose is attached to lipid A and is required for resistance to polymyxin and cationic antimicrobial peptides. In Pseudomonas aeruginosa (strain LESB58), this protein is Undecaprenyl phosphate-alpha-4-amino-4-deoxy-L-arabinose arabinosyl transferase.